Reading from the N-terminus, the 179-residue chain is Peroxiredoxin (179 aa).

The Thioredoxin domain occupies 2–152; that stretch reads TMEKQVPIVT…VEGWFEEEGF (151 aa). Cysteine 56 serves as the catalytic Cysteine sulfenic acid (-SOH) intermediate (for peroxiredoxin activity).

It belongs to the peroxiredoxin family. Prx5 subfamily. Monomer.

It catalyses the reaction a hydroperoxide + 2 glutathione = an alcohol + glutathione disulfide + H2O. Thiol-specific peroxidase that catalyzes the reduction of hydrogen peroxide and organic hydroperoxides to water and alcohols, respectively. Plays a role in cell protection against oxidative stress by detoxifying peroxides. The chain is Peroxiredoxin from Rhizobium etli.